Reading from the N-terminus, the 969-residue chain is Isoleucine--tRNA ligase (969 aa).

Residues 70–80 (PYANGAIHIGH) carry the 'HIGH' region motif. Glu601 serves as a coordination point for L-isoleucyl-5'-AMP. The 'KMSKS' region signature appears at 642-646 (KMSKS). Residue Lys645 coordinates ATP.

The protein belongs to the class-I aminoacyl-tRNA synthetase family. IleS type 1 subfamily. Monomer.

It localises to the cytoplasm. It carries out the reaction tRNA(Ile) + L-isoleucine + ATP = L-isoleucyl-tRNA(Ile) + AMP + diphosphate. Its function is as follows. Catalyzes the attachment of isoleucine to tRNA(Ile). As IleRS can inadvertently accommodate and process structurally similar amino acids such as valine, to avoid such errors it has two additional distinct tRNA(Ile)-dependent editing activities. One activity is designated as 'pretransfer' editing and involves the hydrolysis of activated Val-AMP. The other activity is designated 'posttransfer' editing and involves deacylation of mischarged Val-tRNA(Ile). The protein is Isoleucine--tRNA ligase of Caulobacter vibrioides (strain ATCC 19089 / CIP 103742 / CB 15) (Caulobacter crescentus).